We begin with the raw amino-acid sequence, 167 residues long: Dimethylamine corrinoid protein 3 (167 aa).

The B12-binding N-terminal domain occupies 1 to 44; the sequence is MNEVGVRFERGKLFLPHVMMAADAMTAGVNALKDLMPEGSASSK. The 123-residue stretch at 45–167 folds into the B12-binding domain; that stretch reads MGVIVNGTVE…AVTKAKELLA (123 aa). His-58 is a methylcob(III)alamin binding site.

The protein belongs to the methylamine corrinoid protein family.

Its pathway is one-carbon metabolism; methanogenesis from dimethylamine. In terms of biological role, acts as a methyl group carrier between MtbB and MtbA. The polypeptide is Dimethylamine corrinoid protein 3 (mtbC3) (Methanosarcina mazei (strain ATCC BAA-159 / DSM 3647 / Goe1 / Go1 / JCM 11833 / OCM 88) (Methanosarcina frisia)).